An 87-amino-acid polypeptide reads, in one-letter code: Small ribosomal subunit protein bS20 (87 aa).

Basic residues predominate over residues 1 to 11 (MANHKSALKRI). Residues 1 to 23 (MANHKSALKRIKQTEKRTERNRH) are disordered.

Belongs to the bacterial ribosomal protein bS20 family.

Functionally, binds directly to 16S ribosomal RNA. In Geotalea uraniireducens (strain Rf4) (Geobacter uraniireducens), this protein is Small ribosomal subunit protein bS20.